We begin with the raw amino-acid sequence, 505 residues long: Deoxyguanosinetriphosphate triphosphohydrolase (505 aa).

The HD domain occupies 66 to 273; it reads RLTHSMEVQQ…MEAADDISYC (208 aa).

It belongs to the dGTPase family. Type 1 subfamily. Homotetramer. Mg(2+) is required as a cofactor.

The enzyme catalyses dGTP + H2O = 2'-deoxyguanosine + triphosphate + H(+). Functionally, dGTPase preferentially hydrolyzes dGTP over the other canonical NTPs. The polypeptide is Deoxyguanosinetriphosphate triphosphohydrolase (Escherichia coli O157:H7).